A 169-amino-acid chain; its full sequence is Crossover junction endodeoxyribonuclease RuvC (169 aa).

Residues aspartate 7, glutamate 67, and aspartate 139 contribute to the active site. Residues aspartate 7, glutamate 67, and aspartate 139 each contribute to the Mg(2+) site.

This sequence belongs to the RuvC family. In terms of assembly, homodimer which binds Holliday junction (HJ) DNA. The HJ becomes 2-fold symmetrical on binding to RuvC with unstacked arms; it has a different conformation from HJ DNA in complex with RuvA. In the full resolvosome a probable DNA-RuvA(4)-RuvB(12)-RuvC(2) complex forms which resolves the HJ. It depends on Mg(2+) as a cofactor.

The protein localises to the cytoplasm. The enzyme catalyses Endonucleolytic cleavage at a junction such as a reciprocal single-stranded crossover between two homologous DNA duplexes (Holliday junction).. The RuvA-RuvB-RuvC complex processes Holliday junction (HJ) DNA during genetic recombination and DNA repair. Endonuclease that resolves HJ intermediates. Cleaves cruciform DNA by making single-stranded nicks across the HJ at symmetrical positions within the homologous arms, yielding a 5'-phosphate and a 3'-hydroxyl group; requires a central core of homology in the junction. The consensus cleavage sequence is 5'-(A/T)TT(C/G)-3'. Cleavage occurs on the 3'-side of the TT dinucleotide at the point of strand exchange. HJ branch migration catalyzed by RuvA-RuvB allows RuvC to scan DNA until it finds its consensus sequence, where it cleaves and resolves the cruciform DNA. The sequence is that of Crossover junction endodeoxyribonuclease RuvC from Rhodospirillum rubrum (strain ATCC 11170 / ATH 1.1.1 / DSM 467 / LMG 4362 / NCIMB 8255 / S1).